Consider the following 284-residue polypeptide: MQARGQVLITAAELAGMIQAGDPVSILDVRWRLDEPDGHAAYLQGHLPGAVFVSLEDELSDHTIAGRGRHPLPSGASLQATVRRCGIRHDVPVVVYDDWNRAGSARAWWVLTAAGIANVRILDGGLPAWRSAGGSIETGQVSPQLGNVTVLHDDLYAGQRLTLTAQQAGAGGVTLLDARVPERFRGDVEPVDAVAGHIPGAINVPSGSVLADDGTFLGNGALNALLSDHGIDHGGRVGVYCGSGVSAAVIVAALAVIGQDAELFPGSWSEWSSDPTRPVGRGTA.

Rhodanese domains follow at residues 20–138 (AGDP…SIET) and 169–280 (GAGG…RPVG). Arg-183 is a substrate binding site. Cys-241 functions as the Cysteine persulfide intermediate in the catalytic mechanism.

The enzyme catalyses thiosulfate + hydrogen cyanide = thiocyanate + sulfite + 2 H(+). The polypeptide is Putative thiosulfate sulfurtransferase SseB (sseB) (Mycobacterium tuberculosis (strain CDC 1551 / Oshkosh)).